The following is an 803-amino-acid chain: Elongation factor G, mitochondrial (803 aa).

A mitochondrion-targeting transit peptide spans 1 to 24 (MVRPAQVRAFSGLARSATSTRLIP). One can recognise a tr-type G domain in the interval 102 to 388 (SKVRNIGIAA…GVCDYLPNPS (287 aa)). Residues 111–118 (AHIDSGKT), 186–190 (DTPGH), and 240–243 (NKMD) each bind GTP.

Belongs to the TRAFAC class translation factor GTPase superfamily. Classic translation factor GTPase family. EF-G/EF-2 subfamily.

Its subcellular location is the mitochondrion. Its pathway is protein biosynthesis; polypeptide chain elongation. Functionally, mitochondrial GTPase that catalyzes the GTP-dependent ribosomal translocation step during translation elongation. During this step, the ribosome changes from the pre-translocational (PRE) to the post-translocational (POST) state as the newly formed A-site-bound peptidyl-tRNA and P-site-bound deacylated tRNA move to the P and E sites, respectively. Catalyzes the coordinated movement of the two tRNA molecules, the mRNA and conformational changes in the ribosome. The sequence is that of Elongation factor G, mitochondrial (mef1) from Talaromyces marneffei (strain ATCC 18224 / CBS 334.59 / QM 7333) (Penicillium marneffei).